The primary structure comprises 120 residues: MKILFVLISILYAVYCFSSEEDVDSAYLANELEPVEDINSEQYAALEPKEEQERSCADMGQDCKDDCDCCLNIATCNCWFGRYFCSCTFGDYQTCLRKKGKCKRNRPQSCPRSNLNRKKG.

The first 16 residues, 1–16 (MKILFVLISILYAVYC), serve as a signal peptide directing secretion. A propeptide spanning residues 17–54 (FSSEEDVDSAYLANELEPVEDINSEQYAALEPKEEQER) is cleaved from the precursor. Cystine bridges form between Cys-56–Cys-70, Cys-63–Cys-76, Cys-69–Cys-87, and Cys-78–Cys-85. The Agouti domain occupies 56-95 (CADMGQDCKDDCDCCLNIATCNCWFGRYFCSCTFGDYQTC).

The protein belongs to the neurotoxin 05 (agouti) family. In terms of processing, contains 6 disulfide bonds. In terms of tissue distribution, expressed by the venom gland.

Its subcellular location is the secreted. The protein is U13-lycotoxin-Ls1a of Lycosa singoriensis (Wolf spider).